A 484-amino-acid chain; its full sequence is tRNA sulfurtransferase (484 aa).

The region spanning 63–167 is the THUMP domain; it reads EAFADRLSCI…RENLYLVVNR (105 aa). ATP is bound by residues 185–186, lysine 267, glycine 289, and glutamine 298; that span reads LI. Cysteine 346 and cysteine 458 are oxidised to a cystine. In terms of domain architecture, Rhodanese spans 406-484; the sequence is VNSNEVIIDV…GYENVKVYRP (79 aa). The active-site Cysteine persulfide intermediate is the cysteine 458.

This sequence belongs to the ThiI family.

The protein resides in the cytoplasm. It carries out the reaction [ThiI sulfur-carrier protein]-S-sulfanyl-L-cysteine + a uridine in tRNA + 2 reduced [2Fe-2S]-[ferredoxin] + ATP + H(+) = [ThiI sulfur-carrier protein]-L-cysteine + a 4-thiouridine in tRNA + 2 oxidized [2Fe-2S]-[ferredoxin] + AMP + diphosphate. It catalyses the reaction [ThiS sulfur-carrier protein]-C-terminal Gly-Gly-AMP + S-sulfanyl-L-cysteinyl-[cysteine desulfurase] + AH2 = [ThiS sulfur-carrier protein]-C-terminal-Gly-aminoethanethioate + L-cysteinyl-[cysteine desulfurase] + A + AMP + 2 H(+). It participates in cofactor biosynthesis; thiamine diphosphate biosynthesis. Catalyzes the ATP-dependent transfer of a sulfur to tRNA to produce 4-thiouridine in position 8 of tRNAs, which functions as a near-UV photosensor. Also catalyzes the transfer of sulfur to the sulfur carrier protein ThiS, forming ThiS-thiocarboxylate. This is a step in the synthesis of thiazole, in the thiamine biosynthesis pathway. The sulfur is donated as persulfide by IscS. This is tRNA sulfurtransferase from Shewanella sediminis (strain HAW-EB3).